We begin with the raw amino-acid sequence, 206 residues long: RNA pyrophosphohydrolase (206 aa).

The 145-residue stretch at G6–K150 folds into the Nudix hydrolase domain. The short motif at G38–G59 is the Nudix box element. Residues K162–K191 are compositionally biased toward basic and acidic residues. A disordered region spans residues K162 to Q206.

It belongs to the Nudix hydrolase family. RppH subfamily. The cofactor is a divalent metal cation.

In terms of biological role, accelerates the degradation of transcripts by removing pyrophosphate from the 5'-end of triphosphorylated RNA, leading to a more labile monophosphorylated state that can stimulate subsequent ribonuclease cleavage. This chain is RNA pyrophosphohydrolase, found in Actinobacillus pleuropneumoniae serotype 7 (strain AP76).